Here is a 382-residue protein sequence, read N- to C-terminus: MSEKFYRATYLNVNLDAILANYQNFNQLHANKTVISVIKANGYGLGSVKIAQHLMRHGATFFAVATLDEAIELRMHGVDAKLLVLGVVPTEDIEKAIQHRVALTVPSKAWLKETIKQIPDDNQKNLWLHVKLDTGMGRIGMKDIDEYKEVVDLINKRDHLVFEGVFTHFASADEPGSSMNEQYTLFKEMVNQVEKPIYIHCQNSAGSLLMDGQFCNAIRLGISLYGYYPSEYVKDNVKVHLRPSAQLVSETVQVKTLKVGETVSYGRTFIADEEMTIAILPIGYADGYLRSMQGAFVNVNGSQCEVIGRICMDQMIVKVPSHVKTGEKVILMDNHVDSPQSAEAVANKQGTINYEVLCNLSRRLPRIYYYDNNEEVTNELLK.

The Proton acceptor; specific for D-alanine role is filled by Lys-39. Lys-39 carries the N6-(pyridoxal phosphate)lysine modification. Arg-138 is a binding site for substrate. Tyr-265 (proton acceptor; specific for L-alanine) is an active-site residue. A substrate-binding site is contributed by Met-312.

Belongs to the alanine racemase family. It depends on pyridoxal 5'-phosphate as a cofactor.

The catalysed reaction is L-alanine = D-alanine. It participates in amino-acid biosynthesis; D-alanine biosynthesis; D-alanine from L-alanine: step 1/1. In terms of biological role, catalyzes the interconversion of L-alanine and D-alanine. May also act on other amino acids. This Staphylococcus epidermidis (strain ATCC 35984 / DSM 28319 / BCRC 17069 / CCUG 31568 / BM 3577 / RP62A) protein is Alanine racemase (alr).